The chain runs to 99 residues: Nucleoid-associated protein LACR_0106 (99 aa).

It belongs to the YbaB/EbfC family. Homodimer.

The protein resides in the cytoplasm. The protein localises to the nucleoid. Functionally, binds to DNA and alters its conformation. May be involved in regulation of gene expression, nucleoid organization and DNA protection. This chain is Nucleoid-associated protein LACR_0106, found in Lactococcus lactis subsp. cremoris (strain SK11).